A 196-amino-acid polypeptide reads, in one-letter code: 7-methyl-GTP pyrophosphatase (196 aa).

The active-site Proton acceptor is aspartate 72.

It belongs to the Maf family. YceF subfamily. It depends on a divalent metal cation as a cofactor.

The protein localises to the cytoplasm. It catalyses the reaction N(7)-methyl-GTP + H2O = N(7)-methyl-GMP + diphosphate + H(+). Functionally, nucleoside triphosphate pyrophosphatase that hydrolyzes 7-methyl-GTP (m(7)GTP). May have a dual role in cell division arrest and in preventing the incorporation of modified nucleotides into cellular nucleic acids. This is 7-methyl-GTP pyrophosphatase from Neisseria meningitidis serogroup B (strain ATCC BAA-335 / MC58).